Consider the following 369-residue polypeptide: Transmembrane protein 144 homolog A (369 aa).

10 consecutive transmembrane segments (helical) span residues 6-26, 35-55, 63-83, 85-105, 122-142, 221-241, 256-276, 288-308, 318-338, and 347-367; these read VIGYIGSAAAIIGFGSNYVPV, LSYAFILSIGGLCVAFIAMMI, PIGILGGSLWAMANLLIIPII, LVGLGLGVLLWSSIGIVVGFF, DWMNWLGFVGIVISIFCFFFI, VAGISMSIICGVLLGVNMIPM, IIFSQFAGVFLFNAFTFMFYA, TVFPSFISGVMWGIANCGLMI, GYPISCSGPMIISSLWSVFYF, and LLILCGSFLFLISGIILLAFS.

This sequence belongs to the TMEM144 family.

It is found in the membrane. The polypeptide is Transmembrane protein 144 homolog A (tmem144A) (Dictyostelium discoideum (Social amoeba)).